The sequence spans 104 residues: U20-lycotoxin-Ls1d (104 aa).

Positions 1–30 (MFSTSDQVSKMNSRILSALLILGIATCVIA) are cleaved as a signal peptide. One can recognise a WAP domain in the interval 31–76 (GGFCPKSRHPQCNLSYKINDCCAQSDCRVGSVCCVEGCGNVCRAES). Disulfide bonds link cysteine 34–cysteine 64, cysteine 42–cysteine 68, cysteine 51–cysteine 63, cysteine 52–cysteine 90, and cysteine 57–cysteine 72.

Belongs to the venom protein 11 family. 02 (wap-2) subfamily. In terms of processing, contains 5 disulfide bonds. In terms of tissue distribution, expressed by the venom gland.

It is found in the secreted. Has antibacterial activity. The chain is U20-lycotoxin-Ls1d from Lycosa singoriensis (Wolf spider).